Here is a 195-residue protein sequence, read N- to C-terminus: Imidazoleglycerol-phosphate dehydratase (195 aa).

The protein belongs to the imidazoleglycerol-phosphate dehydratase family.

It is found in the cytoplasm. The catalysed reaction is D-erythro-1-(imidazol-4-yl)glycerol 3-phosphate = 3-(imidazol-4-yl)-2-oxopropyl phosphate + H2O. It functions in the pathway amino-acid biosynthesis; L-histidine biosynthesis; L-histidine from 5-phospho-alpha-D-ribose 1-diphosphate: step 6/9. In Burkholderia vietnamiensis (strain G4 / LMG 22486) (Burkholderia cepacia (strain R1808)), this protein is Imidazoleglycerol-phosphate dehydratase.